The primary structure comprises 57 residues: Large ribosomal subunit protein bL32 (57 aa).

Over residues 1–19 (MATPKRRMSRANTRSRRSQ) the composition is skewed to basic residues. A disordered region spans residues 1 to 20 (MATPKRRMSRANTRSRRSQW).

This sequence belongs to the bacterial ribosomal protein bL32 family.

The protein is Large ribosomal subunit protein bL32 of Mycobacterium marinum (strain ATCC BAA-535 / M).